A 125-amino-acid polypeptide reads, in one-letter code: Histone H2A (125 aa).

Residues 1–18 show a composition bias toward basic residues; it reads MSGRGKGGKVKGKSKTRS. Residues 1–23 are disordered; it reads MSGRGKGGKVKGKSKTRSSRAGL. Serine 2 carries the post-translational modification N-acetylserine. Residue glutamine 104 is modified to N5-methylglutamine.

Belongs to the histone H2A family. The nucleosome is a histone octamer containing two molecules each of H2A, H2B, H3 and H4 assembled in one H3-H4 heterotetramer and two H2A-H2B heterodimers. The octamer wraps approximately 147 bp of DNA.

It localises to the nucleus. Its subcellular location is the chromosome. Its function is as follows. Core component of nucleosome. Nucleosomes wrap and compact DNA into chromatin, limiting DNA accessibility to the cellular machineries which require DNA as a template. Histones thereby play a central role in transcription regulation, DNA repair, DNA replication and chromosomal stability. DNA accessibility is regulated via a complex set of post-translational modifications of histones, also called histone code, and nucleosome remodeling. The protein is Histone H2A of Sepia officinalis (Common cuttlefish).